A 149-amino-acid chain; its full sequence is UPF0756 membrane protein BBR47_32760 (149 aa).

The next 5 membrane-spanning stretches (helical) occupy residues 3–23 (WISI…NATV), 48–68 (HGLQ…LASG), 85–105 (LLAV…TVLM), 106–126 (SQNP…VTFF), and 128–148 (GVAV…QFLP).

Belongs to the UPF0756 family.

Its subcellular location is the cell membrane. This is UPF0756 membrane protein BBR47_32760 from Brevibacillus brevis (strain 47 / JCM 6285 / NBRC 100599).